Consider the following 64-residue polypeptide: Prokaryotic ubiquitin-like protein Pup (64 aa).

The tract at residues 1–35 is disordered; the sequence is MAQGGQVSAGGGRRDDDEPIEQTSGAGTQQVNVTG. Over residues 21 to 33 the composition is skewed to polar residues; that stretch reads EQTSGAGTQQVNV. An ARC ATPase binding region spans residues 21–58; it reads EQTSGAGTQQVNVTGTDDLLDEIDGLLENNAEEFVRSY. Residue Q64 is modified to Deamidated glutamine. Q64 is covalently cross-linked (Isoglutamyl lysine isopeptide (Gln-Lys) (interchain with K-? in acceptor proteins)).

It belongs to the prokaryotic ubiquitin-like protein family. In terms of assembly, strongly interacts with the proteasome-associated ATPase ARC through a hydrophobic interface; the interacting region of Pup lies in its C-terminal half. There is one Pup binding site per ARC hexamer ring. Is modified by deamidation of its C-terminal glutamine to glutamate by the deamidase Dop, a prerequisite to the subsequent pupylation process.

Its pathway is protein degradation; proteasomal Pup-dependent pathway. Its function is as follows. Protein modifier that is covalently attached to lysine residues of substrate proteins, thereby targeting them for proteasomal degradation. The tagging system is termed pupylation. The polypeptide is Prokaryotic ubiquitin-like protein Pup (Corynebacterium jeikeium (strain K411)).